A 137-amino-acid chain; its full sequence is ATP synthase epsilon chain (137 aa).

This sequence belongs to the ATPase epsilon chain family. F-type ATPases have 2 components, CF(1) - the catalytic core - and CF(0) - the membrane proton channel. CF(1) has five subunits: alpha(3), beta(3), gamma(1), delta(1), epsilon(1). CF(0) has three main subunits: a, b and c.

Its subcellular location is the cell membrane. Its function is as follows. Produces ATP from ADP in the presence of a proton gradient across the membrane. The polypeptide is ATP synthase epsilon chain (Syntrophomonas wolfei subsp. wolfei (strain DSM 2245B / Goettingen)).